The sequence spans 859 residues: Homeobox-leucine zipper protein HOX32 (859 aa).

Residues 7-31 (AAVHGVGRQDRSSPGGGGAPQVDTG) are disordered. Positions 29-92 (DTGKYVRYTP…NRRCREKQRK (64 aa)) form a DNA-binding region, homeobox. Residues 100 to 129 (VNRKLTAMNKLLMEENDRLQKQVSRLVYEN) adopt a coiled-coil conformation. A compositionally biased stretch (polar residues) spans 146 to 164 (TSCESVVTSGQHHQQQNPA). The tract at residues 146–172 (TSCESVVTSGQHHQQQNPAATRPQRDA) is disordered. One can recognise an START domain in the interval 171 to 393 (DANNPAGLLA…LRHIRQIAHE (223 aa)).

This sequence belongs to the HD-ZIP homeobox family. Class III subfamily. In terms of tissue distribution, expressed in seedlings, roots, stems, leaf sheaths and blades and panicles.

The protein localises to the nucleus. In terms of biological role, probable transcription factor. This chain is Homeobox-leucine zipper protein HOX32 (HOX32), found in Oryza sativa subsp. japonica (Rice).